A 244-amino-acid polypeptide reads, in one-letter code: 7-cyano-7-deazaguanine synthase (244 aa).

An ATP-binding site is contributed by 14 to 24 (FSGGQDSATCV). Cys-202, Cys-217, Cys-220, and Cys-223 together coordinate Zn(2+).

It belongs to the QueC family. Requires Zn(2+) as cofactor.

The catalysed reaction is 7-carboxy-7-deazaguanine + NH4(+) + ATP = 7-cyano-7-deazaguanine + ADP + phosphate + H2O + H(+). Its pathway is purine metabolism; 7-cyano-7-deazaguanine biosynthesis. In terms of biological role, catalyzes the ATP-dependent conversion of 7-carboxy-7-deazaguanine (CDG) to 7-cyano-7-deazaguanine (preQ(0)). The sequence is that of 7-cyano-7-deazaguanine synthase from Burkholderia lata (strain ATCC 17760 / DSM 23089 / LMG 22485 / NCIMB 9086 / R18194 / 383).